The chain runs to 347 residues: NADH-quinone oxidoreductase subunit H (347 aa).

8 helical membrane passes run 21 to 41, 87 to 107, 120 to 140, 160 to 180, 194 to 214, 259 to 279, 282 to 302, and 324 to 344; these read IAGI…IIYA, GLFL…WAVI, VGLL…VIAG, ISYE…AGTF, WIIN…MFLI, LLMC…PLDI, LYLV…FFIF, and VFLP…MATG.

It belongs to the complex I subunit 1 family. As to quaternary structure, NDH-1 is composed of 14 different subunits. Subunits NuoA, H, J, K, L, M, N constitute the membrane sector of the complex.

It is found in the cell inner membrane. The enzyme catalyses a quinone + NADH + 5 H(+)(in) = a quinol + NAD(+) + 4 H(+)(out). In terms of biological role, NDH-1 shuttles electrons from NADH, via FMN and iron-sulfur (Fe-S) centers, to quinones in the respiratory chain. The immediate electron acceptor for the enzyme in this species is believed to be ubiquinone. Couples the redox reaction to proton translocation (for every two electrons transferred, four hydrogen ions are translocated across the cytoplasmic membrane), and thus conserves the redox energy in a proton gradient. This subunit may bind ubiquinone. The polypeptide is NADH-quinone oxidoreductase subunit H (Novosphingobium aromaticivorans (strain ATCC 700278 / DSM 12444 / CCUG 56034 / CIP 105152 / NBRC 16084 / F199)).